Reading from the N-terminus, the 548-residue chain is CTP synthase (548 aa).

Positions Met1 to Leu276 are amidoligase domain. Ser25 provides a ligand contact to CTP. Position 25 (Ser25) interacts with UTP. Position 26–31 (Gly26–Ile31) interacts with ATP. Residue Tyr66 coordinates L-glutamine. Residue Asp83 coordinates ATP. Mg(2+) contacts are provided by Asp83 and Glu151. CTP is bound by residues Asp158–Glu160, Lys197–Gln202, and Lys233. UTP contacts are provided by residues Lys197–Gln202 and Lys233. Positions Asp303–Thr541 constitute a Glutamine amidotransferase type-1 domain. Gly363 lines the L-glutamine pocket. The active-site Nucleophile; for glutamine hydrolysis is the Cys390. Residues Leu391–Gln394, Glu414, and Arg471 each bind L-glutamine. Active-site residues include His514 and Glu516.

Belongs to the CTP synthase family. Homotetramer.

The catalysed reaction is UTP + L-glutamine + ATP + H2O = CTP + L-glutamate + ADP + phosphate + 2 H(+). It carries out the reaction L-glutamine + H2O = L-glutamate + NH4(+). It catalyses the reaction UTP + NH4(+) + ATP = CTP + ADP + phosphate + 2 H(+). It functions in the pathway pyrimidine metabolism; CTP biosynthesis via de novo pathway; CTP from UDP: step 2/2. Allosterically activated by GTP, when glutamine is the substrate; GTP has no effect on the reaction when ammonia is the substrate. The allosteric effector GTP functions by stabilizing the protein conformation that binds the tetrahedral intermediate(s) formed during glutamine hydrolysis. Inhibited by the product CTP, via allosteric rather than competitive inhibition. In terms of biological role, catalyzes the ATP-dependent amination of UTP to CTP with either L-glutamine or ammonia as the source of nitrogen. Regulates intracellular CTP levels through interactions with the four ribonucleotide triphosphates. The protein is CTP synthase of Natronomonas pharaonis (strain ATCC 35678 / DSM 2160 / CIP 103997 / JCM 8858 / NBRC 14720 / NCIMB 2260 / Gabara) (Halobacterium pharaonis).